A 194-amino-acid chain; its full sequence is Peptidyl-tRNA hydrolase (194 aa).

Tyr-17 lines the tRNA pocket. The active-site Proton acceptor is the His-22. Residues Phe-68, Asn-70, and Asn-116 each contribute to the tRNA site.

Belongs to the PTH family. As to quaternary structure, monomer.

The protein resides in the cytoplasm. The enzyme catalyses an N-acyl-L-alpha-aminoacyl-tRNA + H2O = an N-acyl-L-amino acid + a tRNA + H(+). Hydrolyzes ribosome-free peptidyl-tRNAs (with 1 or more amino acids incorporated), which drop off the ribosome during protein synthesis, or as a result of ribosome stalling. In terms of biological role, catalyzes the release of premature peptidyl moieties from peptidyl-tRNA molecules trapped in stalled 50S ribosomal subunits, and thus maintains levels of free tRNAs and 50S ribosomes. The protein is Peptidyl-tRNA hydrolase of Actinobacillus pleuropneumoniae serotype 7 (strain AP76).